A 776-amino-acid chain; its full sequence is Reticulon-1 (776 aa).

Disordered stretches follow at residues 1 to 103 (MAAP…GEGS), 136 to 168 (ISES…DSGI), 204 to 244 (EVKH…EPAP), and 285 to 580 (LTEI…APPP). A compositionally biased stretch (basic and acidic residues) spans 204 to 240 (EVKHQEQNHPELEDKDLDFKNKDTDISIKPEGVREPD). Ser327 is subject to Phosphoserine. The span at 328–341 (PGSITPPSSGTEPS) shows a compositional bias: low complexity. 3 positions are modified to phosphoserine: Ser350, Ser352, and Ser487. Basic and acidic residues predominate over residues 497–511 (AIREETGVRAEERAP). The Reticulon domain maps to 589–776 (AIDLLYWRDI…KIPGAKRHAE (188 aa)). The next 2 membrane-spanning stretches (helical) occupy residues 603 to 623 (IVFG…VVSV) and 705 to 725 (FAVL…LTLL).

In terms of assembly, interacts with NDRG1. Interacts with BACE1. Interacts with TMEM33. Post-translationally, phosphorylated.

It is found in the endoplasmic reticulum membrane. It localises to the golgi apparatus membrane. Inhibits amyloid precursor protein processing, probably by blocking BACE1 activity. The chain is Reticulon-1 (RTN1) from Pan troglodytes (Chimpanzee).